We begin with the raw amino-acid sequence, 1567 residues long: Ice nucleation protein (1567 aa).

Residues Pro130–Ala185 show a composition bias toward low complexity. 13 disordered regions span residues Pro130–Asp195, Tyr270–Asp329, Ala356–Val378, Thr449–Ile474, Ser502–Thr529, Gln594–Ala620, Gln642–Ala668, Thr689–Ala716, Gln738–Ala764, Thr785–Ile810, Thr833–Ala860, Thr929–Gly959, and Thr977–Ala1004. A compositionally biased stretch (polar residues) spans Tyr270–Leu282. The segment covering Thr283 to Ser296 has biased composition (low complexity). Polar residues-rich tracts occupy residues Tyr302 to Arg325, Ala356 to Arg373, Thr449 to Arg469, and Ser502 to Asp519. A compositionally biased stretch (low complexity) spans Ser520–Thr529. Composition is skewed to polar residues over residues Gln594 to Arg613, Gln642 to Arg661, Thr689 to Arg709, Gln738 to Arg757, Thr785 to Arg805, Thr833 to Arg853, Thr929 to Arg949, and Thr977 to Arg997.

The protein belongs to the bacterial ice nucleation protein family.

It localises to the cell outer membrane. Its function is as follows. Ice nucleation proteins enable bacteria to nucleate crystallization in supercooled water. The chain is Ice nucleation protein (inaX) from Xanthomonas campestris pv. translucens.